The chain runs to 406 residues: Elongation factor Tu (406 aa).

The 206-residue stretch at 10-215 (KPHVNVGTIG…AIDEYIPTPV (206 aa)) folds into the tr-type G domain. The segment at 19–26 (GHVDHGKT) is G1. 19–26 (GHVDHGKT) contacts GTP. Thr-26 lines the Mg(2+) pocket. Residues 61 to 65 (GITIN) are G2. The segment at 82–85 (DCPG) is G3. GTP is bound by residues 82–86 (DCPGH) and 137–140 (NKVD). The interval 137–140 (NKVD) is G4. Positions 175–177 (SAL) are G5.

The protein belongs to the TRAFAC class translation factor GTPase superfamily. Classic translation factor GTPase family. EF-Tu/EF-1A subfamily. In terms of assembly, monomer.

It is found in the cytoplasm. It carries out the reaction GTP + H2O = GDP + phosphate + H(+). In terms of biological role, GTP hydrolase that promotes the GTP-dependent binding of aminoacyl-tRNA to the A-site of ribosomes during protein biosynthesis. This Thermus aquaticus protein is Elongation factor Tu.